A 334-amino-acid chain; its full sequence is Glyoxylate reductase (334 aa).

Residues 158 to 161, 180 to 182, and 239 to 241 contribute to the NADP(+) site; these read FGRI, SRT, and IAR. Residues Arg-241 and Glu-270 contribute to the active site. His-288 serves as the catalytic Proton donor. An NADP(+)-binding site is contributed by 288–290; that stretch reads HIG.

This sequence belongs to the D-isomer specific 2-hydroxyacid dehydrogenase family. GyaR subfamily. In terms of assembly, homodimer.

Its subcellular location is the cytoplasm. It catalyses the reaction glycolate + NAD(+) = glyoxylate + NADH + H(+). The protein is Glyoxylate reductase of Thermococcus gammatolerans (strain DSM 15229 / JCM 11827 / EJ3).